A 152-amino-acid chain; its full sequence is Deoxyuridine 5'-triphosphate nucleotidohydrolase (152 aa).

Substrate is bound by residues 71-73 (RSG), Asn-84, 88-90 (LID), and Met-98.

Belongs to the dUTPase family. Requires Mg(2+) as cofactor.

The catalysed reaction is dUTP + H2O = dUMP + diphosphate + H(+). The protein operates within pyrimidine metabolism; dUMP biosynthesis; dUMP from dCTP (dUTP route): step 2/2. Its function is as follows. This enzyme is involved in nucleotide metabolism: it produces dUMP, the immediate precursor of thymidine nucleotides and it decreases the intracellular concentration of dUTP so that uracil cannot be incorporated into DNA. The protein is Deoxyuridine 5'-triphosphate nucleotidohydrolase of Pectobacterium carotovorum subsp. carotovorum (strain PC1).